Here is a 267-residue protein sequence, read N- to C-terminus: Lectin SfL-2 (267 aa).

Repeat copies occupy residues 1–67 (GRYT…RRGE), 68–135 (SNNY…QAEG), 136–202 (DTYN…LTGA), and 203–267 (NNYK…GVAN). A 4 X approximate tandem repeats region spans residues 1-267 (GRYTVQNQWG…GPIGFKGVAN (267 aa)).

In terms of assembly, monomer.

Lectin specific for high mannose N-glycans, recognizes the branched moiety of these glycans. Does not recognize other types of N-glycans or monosaccharides. This Solieria filiformis (Red alga) protein is Lectin SfL-2.